The chain runs to 100 residues: Integration host factor subunit alpha (100 aa).

This sequence belongs to the bacterial histone-like protein family. Heterodimer of an alpha and a beta chain.

In terms of biological role, this protein is one of the two subunits of integration host factor, a specific DNA-binding protein that functions in genetic recombination as well as in transcriptional and translational control. This is Integration host factor subunit alpha from Methylobacillus flagellatus (strain ATCC 51484 / DSM 6875 / VKM B-1610 / KT).